Here is a 282-residue protein sequence, read N- to C-terminus: UDP-N-acetylenolpyruvoylglucosamine reductase (282 aa).

In terms of domain architecture, FAD-binding PCMH-type spans 15–179 (IKSFAKYVYF…LSAEFEFEYK (165 aa)). Arg157 is a catalytic residue. The active-site Proton donor is the Ser207. Glu278 is a catalytic residue.

Belongs to the MurB family. FAD serves as cofactor.

Its subcellular location is the cytoplasm. It carries out the reaction UDP-N-acetyl-alpha-D-muramate + NADP(+) = UDP-N-acetyl-3-O-(1-carboxyvinyl)-alpha-D-glucosamine + NADPH + H(+). It functions in the pathway cell wall biogenesis; peptidoglycan biosynthesis. Its function is as follows. Cell wall formation. In Francisella tularensis subsp. tularensis (strain SCHU S4 / Schu 4), this protein is UDP-N-acetylenolpyruvoylglucosamine reductase.